Consider the following 364-residue polypeptide: Aminomethyltransferase (364 aa).

This sequence belongs to the GcvT family. The glycine cleavage system is composed of four proteins: P, T, L and H.

It catalyses the reaction N(6)-[(R)-S(8)-aminomethyldihydrolipoyl]-L-lysyl-[protein] + (6S)-5,6,7,8-tetrahydrofolate = N(6)-[(R)-dihydrolipoyl]-L-lysyl-[protein] + (6R)-5,10-methylene-5,6,7,8-tetrahydrofolate + NH4(+). The glycine cleavage system catalyzes the degradation of glycine. The sequence is that of Aminomethyltransferase from Shigella flexneri serotype 5b (strain 8401).